The primary structure comprises 297 residues: Phosphoribosylaminoimidazole-succinocarboxamide synthase (297 aa).

This sequence belongs to the SAICAR synthetase family.

The catalysed reaction is 5-amino-1-(5-phospho-D-ribosyl)imidazole-4-carboxylate + L-aspartate + ATP = (2S)-2-[5-amino-1-(5-phospho-beta-D-ribosyl)imidazole-4-carboxamido]succinate + ADP + phosphate + 2 H(+). It functions in the pathway purine metabolism; IMP biosynthesis via de novo pathway; 5-amino-1-(5-phospho-D-ribosyl)imidazole-4-carboxamide from 5-amino-1-(5-phospho-D-ribosyl)imidazole-4-carboxylate: step 1/2. This chain is Phosphoribosylaminoimidazole-succinocarboxamide synthase, found in Mycobacterium tuberculosis (strain ATCC 25177 / H37Ra).